Consider the following 200-residue polypeptide: dITP/XTP pyrophosphatase (200 aa).

7–12 (TSNKHK) is a binding site for substrate. 2 residues coordinate Mg(2+): Glu38 and Asp73. Residue Asp73 is the Proton acceptor of the active site. Residues Ser74, 154–157 (FGYD), Lys177, and 182–183 (HR) each bind substrate.

This sequence belongs to the HAM1 NTPase family. As to quaternary structure, homodimer. It depends on Mg(2+) as a cofactor.

It catalyses the reaction XTP + H2O = XMP + diphosphate + H(+). The catalysed reaction is dITP + H2O = dIMP + diphosphate + H(+). The enzyme catalyses ITP + H2O = IMP + diphosphate + H(+). Pyrophosphatase that catalyzes the hydrolysis of nucleoside triphosphates to their monophosphate derivatives, with a high preference for the non-canonical purine nucleotides XTP (xanthosine triphosphate), dITP (deoxyinosine triphosphate) and ITP. Seems to function as a house-cleaning enzyme that removes non-canonical purine nucleotides from the nucleotide pool, thus preventing their incorporation into DNA/RNA and avoiding chromosomal lesions. The sequence is that of dITP/XTP pyrophosphatase from Campylobacter jejuni subsp. jejuni serotype O:6 (strain 81116 / NCTC 11828).